A 2579-amino-acid polypeptide reads, in one-letter code: MAEAVKPQRRAKAKASRTKTKEKKKYETPQREESSEVSLPKTSREQEIPSLACEFKGDHLKVVTDSQLQDDASGQNESEMFDVPLTSLTISNEESLTCNTEPPKEGGEARPCVGDSAVTPKVHPGDNVGTKVETPKNFTEVEENMSVQGGLSESAPQSNFSYTQPAMENIQVRETQNSKEDKQGLVCSSEVPQNVGLQSSCPAKHGFQTPRVKKLYPQLPAEIAGEAPALVAVKPLLRSERLYPELPSQLELVPFTKEQLKILEPGSWLENVESYLEEFDSMAHQDRHEFYELLLNYSRCRKQLLLAEAELLTLTSDCQNAKSRLWQFKEEQMSVQGICADQVKVFSYHRYQRVEMNENALVELKKLFDAKSEHLHQTLALHSYTSVLSRLQVESYIYALLSSSAVLRSSAIHQQGRASKQTESIPSDLCQLKECISVLFMFTRRVNEDTQFHDDILLWLQKLVSVLQRVGCPGDHLFLLNHILRCPAGVSKWAVPFIQIKVLHNPSGVFHFMQSLALLMSPVKNRAEFMCHMKPSERKPSSSGPGSGTWTLVDEGGEEDEDPETSWILLNEDDLVTILAQFPFHELFQHLLGFKAKGDYLPETTRPQEMMKIFAFANSLVELLAVGLETFNRARYRQFVKRIGYMIRMTLGYVSDHWAQYVSHNQGSGLAQQPYSMEKLQVEFDELFLRAVLHVLKAKRLGIWLFMSEMPFGTLSVQMLWKLFYLMHQVESENLQQLSSSLQPAQCKQQLQDPEHFTNFEKCLSSMNSSEEICLLTTFAQMAQARRTNVDEDFIKIIVLEIYEVSYVTLSTRETFSKVGRELLGTITAVHPEIISVLLDRVQETIDQVGMVSLYLFKELPLYLWQPSASEIAVIRDWLLNYNLTVVKNKLACVILEGLNWGFAKQATLHLDQAVHAEVALMVLEAYQKYLAQKPYAGILSESMKQVSYLASIVRYGETPETSFNQWAWNLILRLKLHKNDYGIQPNCPAVPFSVTVPDMTESPTFHPLLKAVKAGMPIGCYLALSMTAVGHSIEKFCAEGIPLLGILVQSRHLRTVVHVLDKILPLFYPCQYYLLKNEQFLSHLLLFLHLDSGVPQGVTQQVTHKVAQHLTGASHGDNVKLLNSMIQAHISVSTQPNEVGPVAVLEFWVQALISQHLWYREQPILFLMDHLCKAAFQLMQEDCIQKLLYQQHKNALGYHCDRSLLSSLVSWIVAGNITPSFVEGLATPTQVWFAWTVLNMESIFEEDSQLRRVIEGELVINSAFTPDQALKKAQTQLKLPIVPSLQRLLIYRWAHQALVTPSDHPLLPLIWQKFFLLYLHRPGPQYGLPIDGCIGRRFFQSPAHINLLKEMKRRLTEVADFHHAASKALRVPAEGSEGLPESHSGTPGYLTSPELHKELVRLFNVYILWLEDENFQKGDTYIPSLPKHYDIHRLAKVMQNQQDLWMEYLNMERIYHEFQETVGLWTQAKLESHSTPCSLSVQLDFTDPLLAKERVLSNLRKHEAPQPPLALHPTKPPVPVISSAVLLSQKDATQLVCTDLNLLQQQARTAALRESQQVALDGELLDTMPKQYVNREEQTTLHLECRGSSGKKCQGAAVVTVQFEGMHKNEAISQQLHVLRKEVKQLQAEAAKPPSLNIVEAAVHAENLITALVNAYKLQPTPGIQKVGISLFFTIVDYVSDETQRHPPTRQFFTSCIEILGQVFISGIKSECRKVLETILKNSRLCSLLSPFFTPNAAPAEFIQLYEQVVKFLSEDNSDMIFMLLTKFDLKQWLSATKPPLSDRTRLLESIHLALTAWGLEPDEDILMPFNLFCKHWTYLLLYQFPDQYSDILRLLMQSSAEQLLSPECWKATLRALGCCAPSCQQGAASTEGAVLPSSSDALLSDKQVMETIQWLSDFFYKLRLSKMDFKSFGLFSKWSPYMADVKTFLGYLVKRLIDLEMTCLAQDPTASRKTVLKSLHSVIIQLFKPWILVLEDNESSQQRHYPWLESDTVVASSIVQLFTDCIDSLHESFKDKLLPGDAGALWLHLMHYCEACTAPKMPEFILYAFHSTYRKLPWKDLHPDQMLMEAFFKVERGSPKSCFLFLGSVLCEVNWVSVLSDAWNSSPHPETRSMIVCLLFMMILLAKEVQLVDQTDSPLLSLLGQTSSLSWHLVDIVSYQSVLSYFSSHYPPSIILAKESYAELIMKLLKVSAGLSIPTDSQKHLDAVPKCQAFTHQMVQFLSTLEQNGKITLAVLEQEMSKLLDDIIVFNPPDMDSQTRHMALSSLFMEVLMMMNNATIPTAEFLRGSIRTWIGQKMHGLVVLPLLTAACQSLASVRHMAETTEACITAYFKESPLNQNSGWGPILVSLQVPELTMEEFLQECLTLGSYLTLYVYLLQCLNSEQTLRNEMKVLLILSKWLEQVYPSSVEEEAKLFLWWHQVLQLSLIQTEQNDSVLTESVIRILLLVQSRQNLVAEERLSSGILGAIGFGRKSPLSNRFRVVARSMAAFLSVQVPMEDQIRLRPGSELHLTPKAQQALNALESMASSKQYVEYQDQILQATQFIRHPGHCLQDGKSFLALLVNCLYPEVHYLDHIR.

Disordered regions lie at residues 1–46 and 92–132; these read MAEA…SREQ and NEES…GTKV. The segment covering 7–23 has biased composition (basic residues); that stretch reads PQRRAKAKASRTKTKEK. Residues 24 to 34 show a composition bias toward basic and acidic residues; that stretch reads KKYETPQREES. A Phosphothreonine modification is found at Thr-134. Residues 535–564 are disordered; that stretch reads PSERKPSSSGPGSGTWTLVDEGGEEDEDPE. The segment covering 555–564 has biased composition (acidic residues); that stretch reads EGGEEDEDPE. A coiled-coil region spans residues 1607–1633; it reads MHKNEAISQQLHVLRKEVKQLQAEAAK.

The protein belongs to the EPG5 family. In terms of assembly, interacts with RAN.

The protein resides in the cytoplasm. It is found in the perinuclear region. Its subcellular location is the lysosome. In terms of biological role, involved in autophagy. May play a role in a late step of autophagy, such as clearance of autophagosomal cargo. Plays a key role in innate and adaptive immune response triggered by unmethylated cytidine-phosphate-guanosine (CpG) dinucleotides from pathogens, and mediated by the nucleotide-sensing receptor TLR9. It is necessary for the translocation of CpG dinucleotides from early endosomes to late endosomes and lysosomes, where TLR9 is located. The chain is Ectopic P granules protein 5 homolog (EPG5) from Homo sapiens (Human).